Consider the following 432-residue polypeptide: Glutamyl-tRNA reductase (432 aa).

Substrate-binding positions include 49–52 (TCNR), Ser107, 112–114 (ETQ), and Gln118. Cys50 acts as the Nucleophile in catalysis. 186–191 (GAGEMG) serves as a coordination point for NADP(+).

Belongs to the glutamyl-tRNA reductase family. In terms of assembly, homodimer.

The enzyme catalyses (S)-4-amino-5-oxopentanoate + tRNA(Glu) + NADP(+) = L-glutamyl-tRNA(Glu) + NADPH + H(+). The protein operates within porphyrin-containing compound metabolism; protoporphyrin-IX biosynthesis; 5-aminolevulinate from L-glutamyl-tRNA(Glu): step 1/2. Functionally, catalyzes the NADPH-dependent reduction of glutamyl-tRNA(Glu) to glutamate 1-semialdehyde (GSA). The protein is Glutamyl-tRNA reductase of Campylobacter jejuni subsp. doylei (strain ATCC BAA-1458 / RM4099 / 269.97).